We begin with the raw amino-acid sequence, 471 residues long: Glutamate--tRNA ligase (471 aa).

Positions 9 to 19 match the 'HIGH' region motif; the sequence is PSPTGYLHVGG. 4 residues coordinate Zn(2+): cysteine 98, cysteine 100, cysteine 125, and histidine 127. Residues 237 to 241 carry the 'KMSKS' region motif; it reads KLSKR. Lysine 240 contacts ATP.

The protein belongs to the class-I aminoacyl-tRNA synthetase family. Glutamate--tRNA ligase type 1 subfamily. In terms of assembly, monomer. It depends on Zn(2+) as a cofactor.

The protein resides in the cytoplasm. The catalysed reaction is tRNA(Glu) + L-glutamate + ATP = L-glutamyl-tRNA(Glu) + AMP + diphosphate. Catalyzes the attachment of glutamate to tRNA(Glu) in a two-step reaction: glutamate is first activated by ATP to form Glu-AMP and then transferred to the acceptor end of tRNA(Glu). In Shigella boydii serotype 4 (strain Sb227), this protein is Glutamate--tRNA ligase.